Here is a 285-residue protein sequence, read N- to C-terminus: Sulfotransferase 2A1 (285 aa).

3'-phosphoadenylyl sulfate-binding residues include Lys-44, Ser-45, Gly-46, Thr-47, Asn-48, and Trp-49. His-99 acts as the Proton acceptor in catalysis. 3'-phosphoadenylyl sulfate-binding residues include Arg-121, Ser-129, Tyr-184, Ser-218, Met-223, Arg-247, Lys-248, and Gly-249. Residue Ser-251 is modified to Phosphoserine.

Belongs to the sulfotransferase 1 family. Homodimer. The N-terminus is blocked. In terms of tissue distribution, liver, adrenal and at lower level in the kidney. Is present in human fetus in higher level in the adrenal than the liver and the kidney.

It is found in the cytoplasm. The catalysed reaction is an alcohol + 3'-phosphoadenylyl sulfate = an alkyl sulfate + adenosine 3',5'-bisphosphate + H(+). It carries out the reaction (24S)-hydroxycholesterol + 3'-phosphoadenylyl sulfate = (24S)-hydroxycholesterol 24-sulfate + adenosine 3',5'-bisphosphate + H(+). The enzyme catalyses (24S)-hydroxycholesterol + 3'-phosphoadenylyl sulfate = (24S)-hydroxycholesterol 3-sulfate + adenosine 3',5'-bisphosphate + H(+). It catalyses the reaction (24S)-hydroxycholesterol 24-sulfate + 3'-phosphoadenylyl sulfate = (24S)-hydroxycholesterol 3,24-disulfate + adenosine 3',5'-bisphosphate + H(+). The catalysed reaction is 3beta-hydroxyandrost-5-en-17-one + 3'-phosphoadenylyl sulfate = dehydroepiandrosterone 3-sulfate + adenosine 3',5'-bisphosphate + H(+). It carries out the reaction pregnenolone + 3'-phosphoadenylyl sulfate = pregnenolone sulfate + adenosine 3',5'-bisphosphate + H(+). The enzyme catalyses androsterone + 3'-phosphoadenylyl sulfate = androsterone 3alpha-sulfate + adenosine 3',5'-bisphosphate + H(+). It catalyses the reaction taurolithocholate + 3'-phosphoadenylyl sulfate = taurolithocholate 3-sulfate + adenosine 3',5'-bisphosphate + H(+). The catalysed reaction is lithocholate + 3'-phosphoadenylyl sulfate = lithocholate sulfate + adenosine 3',5'-bisphosphate + H(+). Its activity is regulated as follows. Subject to substrate inhibition. Alternate orientations for binding of steroid substrates to SULT2A1 may play a role in substrate inhibition. Functionally, sulfotransferase that utilizes 3'-phospho-5'-adenylyl sulfate (PAPS) as sulfonate donor to catalyze the sulfonation of steroids and bile acids in the liver and adrenal glands. Mediates the sulfation of a wide range of steroids and sterols, including pregnenolone, androsterone, DHEA, bile acids, cholesterol and as well many xenobiotics that contain alcohol and phenol functional groups. Sulfonation increases the water solubility of most compounds, and therefore their renal excretion, but it can also result in bioactivation to form active metabolites. Plays an important role in maintening steroid and lipid homeostasis. Plays a key role in bile acid metabolism. In addition, catalyzes the metabolic activation of potent carcinogenic polycyclic arylmethanols. This is Sulfotransferase 2A1 (SULT2A1) from Homo sapiens (Human).